The primary structure comprises 237 residues: 7-cyano-7-deazaguanine synthase (237 aa).

15 to 25 (LSGGMDSTVCA) is a binding site for ATP. Cysteine 197, cysteine 205, cysteine 208, and cysteine 211 together coordinate Zn(2+).

Belongs to the QueC family. It depends on Zn(2+) as a cofactor.

It catalyses the reaction 7-carboxy-7-deazaguanine + NH4(+) + ATP = 7-cyano-7-deazaguanine + ADP + phosphate + H2O + H(+). It participates in purine metabolism; 7-cyano-7-deazaguanine biosynthesis. Its function is as follows. Catalyzes the ATP-dependent conversion of 7-carboxy-7-deazaguanine (CDG) to 7-cyano-7-deazaguanine (preQ(0)). This is 7-cyano-7-deazaguanine synthase from Koribacter versatilis (strain Ellin345).